The sequence spans 134 residues: Arsenate reductase (134 aa).

Active-site nucleophile residues include cysteine 11, cysteine 83, and cysteine 90. Intrachain disulfides connect cysteine 11-cysteine 83 and cysteine 83-cysteine 90.

This sequence belongs to the low molecular weight phosphotyrosine protein phosphatase family. Thioredoxin-coupled ArsC subfamily.

It localises to the cytoplasm. The enzyme catalyses arsenate + [thioredoxin]-dithiol + H(+) = arsenite + [thioredoxin]-disulfide + H2O. Its function is as follows. Catalyzes the reduction of arsenate [As(V)] to arsenite [As(III)]. The sequence is that of Arsenate reductase from Brevibacillus brevis (strain 47 / JCM 6285 / NBRC 100599).